A 353-amino-acid chain; its full sequence is GTPase Obg (353 aa).

The 159-residue stretch at 1-159 folds into the Obg domain; that stretch reads MRFVDEVVIN…RVIRLELKLL (159 aa). The region spanning 160 to 334 is the OBG-type G domain; the sequence is ADVGLLGMPN…LCTAIMQELT (175 aa). GTP contacts are provided by residues 166-173, 191-195, 213-216, 284-287, and 315-317; these read GMPNAGKS, FTTLH, DIPG, NKMD, and SAA. Mg(2+)-binding residues include serine 173 and threonine 193.

Belongs to the TRAFAC class OBG-HflX-like GTPase superfamily. OBG GTPase family. Monomer. The cofactor is Mg(2+).

Its subcellular location is the cytoplasm. Functionally, an essential GTPase which binds GTP, GDP and possibly (p)ppGpp with moderate affinity, with high nucleotide exchange rates and a fairly low GTP hydrolysis rate. Plays a role in control of the cell cycle, stress response, ribosome biogenesis and in those bacteria that undergo differentiation, in morphogenesis control. This is GTPase Obg from Dichelobacter nodosus (strain VCS1703A).